Here is a 134-residue protein sequence, read N- to C-terminus: Small ribosomal subunit protein uS8c (134 aa).

Belongs to the universal ribosomal protein uS8 family. In terms of assembly, part of the 30S ribosomal subunit.

Its subcellular location is the plastid. It is found in the chloroplast. One of the primary rRNA binding proteins, it binds directly to 16S rRNA central domain where it helps coordinate assembly of the platform of the 30S subunit. This is Small ribosomal subunit protein uS8c (rps8) from Gossypium barbadense (Sea Island cotton).